A 185-amino-acid chain; its full sequence is Bacteriocin UviA (185 aa).

Its function is as follows. May have a role in bacteriocin secretion or immunity. The chain is Bacteriocin UviA (uviA) from Clostridium perfringens.